The following is a 263-amino-acid chain: MQIVILKDSASVAEYGANIFIKQLQKKADSVLGLATGSTPLSLYQGLIAANKDKQISFKAVTTFNLDEYLGLEGTHPQSYRYFMNEQLFDHIDIDKSKTFVPPGDAENPIAACQGYEDKIKSAGGIDIQLLGIGRNGHIGFNEPSSGLMSRTRVKTLTKATIDDNARFFKEGEYQPHLSITMGIGTILDAKKVVLLATGENKAEAILATVEGALTAACPASALQLHQDAVLVIDEAAASKLTDRDFYKHIEVENQKLMARLGL.

Catalysis depends on Asp67, which acts as the Proton acceptor; for enolization step. The active-site For ring-opening step is the Asn136. His138 serves as the catalytic Proton acceptor; for ring-opening step. The active-site For ring-opening step is the Glu143.

Belongs to the glucosamine/galactosamine-6-phosphate isomerase family. NagB subfamily. In terms of assembly, homohexamer.

It carries out the reaction alpha-D-glucosamine 6-phosphate + H2O = beta-D-fructose 6-phosphate + NH4(+). It functions in the pathway amino-sugar metabolism; N-acetylneuraminate degradation; D-fructose 6-phosphate from N-acetylneuraminate: step 5/5. In terms of biological role, catalyzes the reversible isomerization-deamination of glucosamine 6-phosphate (GlcN6P) to form fructose 6-phosphate (Fru6P) and ammonium ion. The sequence is that of Glucosamine-6-phosphate deaminase from Shewanella halifaxensis (strain HAW-EB4).